Consider the following 1412-residue polypeptide: DNA-directed RNA polymerase subunit beta' (1412 aa).

Cys70, Cys72, Cys85, and Cys88 together coordinate Zn(2+). 3 residues coordinate Mg(2+): Asp460, Asp462, and Asp464. Cys819, Cys893, Cys900, and Cys903 together coordinate Zn(2+). The interval 1393 to 1412 is disordered; it reads EAFEFGTPSAPAEEPQHPAE.

The protein belongs to the RNA polymerase beta' chain family. As to quaternary structure, the RNAP catalytic core consists of 2 alpha, 1 beta, 1 beta' and 1 omega subunit. When a sigma factor is associated with the core the holoenzyme is formed, which can initiate transcription. It depends on Mg(2+) as a cofactor. Requires Zn(2+) as cofactor.

The enzyme catalyses RNA(n) + a ribonucleoside 5'-triphosphate = RNA(n+1) + diphosphate. Its function is as follows. DNA-dependent RNA polymerase catalyzes the transcription of DNA into RNA using the four ribonucleoside triphosphates as substrates. This Burkholderia mallei (strain NCTC 10229) protein is DNA-directed RNA polymerase subunit beta'.